The following is a 115-amino-acid chain: NADH-ubiquinone oxidoreductase chain 3 (115 aa).

A run of 3 helical transmembrane segments spans residues 3-23, 55-75, and 86-106; these read IMLT…IAFW, FFLV…LLPL, and TMLT…AYEW.

It belongs to the complex I subunit 3 family. As to quaternary structure, core subunit of respiratory chain NADH dehydrogenase (Complex I) which is composed of 45 different subunits. Interacts with TMEM186. Interacts with TMEM242.

It is found in the mitochondrion inner membrane. It carries out the reaction a ubiquinone + NADH + 5 H(+)(in) = a ubiquinol + NAD(+) + 4 H(+)(out). Core subunit of the mitochondrial membrane respiratory chain NADH dehydrogenase (Complex I) which catalyzes electron transfer from NADH through the respiratory chain, using ubiquinone as an electron acceptor. Essential for the catalytic activity of complex I. This Sus scrofa (Pig) protein is NADH-ubiquinone oxidoreductase chain 3.